Here is a 131-residue protein sequence, read N- to C-terminus: Small ribosomal subunit protein uS8 (131 aa).

It belongs to the universal ribosomal protein uS8 family. In terms of assembly, part of the 30S ribosomal subunit. Contacts proteins S5 and S12.

Functionally, one of the primary rRNA binding proteins, it binds directly to 16S rRNA central domain where it helps coordinate assembly of the platform of the 30S subunit. This Chlorobium chlorochromatii (strain CaD3) protein is Small ribosomal subunit protein uS8.